Consider the following 452-residue polypeptide: Isocitrate dehydrogenase [NADP], mitochondrial (452 aa).

The N-terminal 39 residues, 1–39, are a transit peptide targeting the mitochondrion; it reads MAGYLRVVRSLCRASGSGSAWAPAALTAPNLQEQPRRHY. Lysine 45, lysine 48, lysine 67, and lysine 69 each carry N6-acetyllysine. Residues lysine 80 and lysine 106 each carry the N6-acetyllysine; alternate modification. N6-succinyllysine; alternate is present on residues lysine 80 and lysine 106. NADP(+) contacts are provided by residues 115-117 and arginine 122; that span reads TIT. D-threo-isocitrate is bound at residue threonine 117. Residues 134–140 and arginine 149 each bind D-threo-isocitrate; that span reads SPNGTIR. Lysine 155 is modified (N6-acetyllysine). At lysine 166 the chain carries N6-acetyllysine; alternate. Lysine 166 carries the N6-succinyllysine; alternate modification. Arginine 172 is a D-threo-isocitrate binding site. An N6-acetyllysine; alternate mark is found at lysine 180 and lysine 193. N6-succinyllysine; alternate occurs at positions 180 and 193. Lysine 199 carries the post-translational modification N6-acetyllysine. The residue at position 256 (lysine 256) is an N6-acetyllysine; alternate. An N6-succinyllysine; alternate modification is found at lysine 256. An N6-acetyllysine mark is found at lysine 263, lysine 272, lysine 275, and lysine 280. Lysine 282 bears the N6-acetyllysine; alternate mark. Lysine 282 is subject to N6-succinyllysine; alternate. Aspartate 291 serves as a coordination point for Mn(2+). Lysine 299 serves as a coordination point for NADP(+). Aspartate 314 contacts Mn(2+). NADP(+) is bound by residues 349–354 and asparagine 367; that span reads GTVTRH. Lysine 384 carries the post-translational modification N6-acetyllysine; alternate. The residue at position 384 (lysine 384) is an N6-succinyllysine; alternate. 3 positions are modified to N6-acetyllysine: lysine 400, lysine 413, and lysine 442.

Belongs to the isocitrate and isopropylmalate dehydrogenases family. Homodimer. It depends on Mg(2+) as a cofactor. Requires Mn(2+) as cofactor. Post-translationally, acetylation at Lys-413 dramatically reduces catalytic activity. Deacetylated by SIRT3.

Its subcellular location is the mitochondrion. The catalysed reaction is D-threo-isocitrate + NADP(+) = 2-oxoglutarate + CO2 + NADPH. Plays a role in intermediary metabolism and energy production. It may tightly associate or interact with the pyruvate dehydrogenase complex. This Bos taurus (Bovine) protein is Isocitrate dehydrogenase [NADP], mitochondrial (IDH2).